Here is a 133-residue protein sequence, read N- to C-terminus: Classical arabinogalactan protein 5 (133 aa).

A signal peptide spans Met-1 to Ala-21. The residue at position 22 (Gln-22) is a Pyrrolidone carboxylic acid. Residues Ala-23–Ala-110 are disordered. The span at Gly-25–Pro-37 shows a compositional bias: pro residues. The span at Thr-38–Pro-48 shows a compositional bias: low complexity. Residues Ala-49 to Ser-81 are compositionally biased toward pro residues. Asn-109 carries GPI-anchor amidated asparagine lipidation. Positions Ala-110–Leu-133 are cleaved as a propeptide — removed in mature form.

The protein belongs to the classical AGP family. Post-translationally, O-glycosylated on the hydroxyproline residues. As to expression, expressed at a low level in flowers and siliques.

It is found in the cell membrane. Its function is as follows. Proteoglycan that seems to be implicated in diverse developmental roles such as differentiation, cell-cell recognition, embryogenesis and programmed cell death. The sequence is that of Classical arabinogalactan protein 5 (AGP5) from Arabidopsis thaliana (Mouse-ear cress).